We begin with the raw amino-acid sequence, 464 residues long: Phospho-cellobiase (464 aa).

Glutamate 172 acts as the Proton donor in catalysis. The active-site Nucleophile is glutamate 361.

The protein belongs to the glycosyl hydrolase 1 family.

In Klebsiella oxytoca, this protein is Phospho-cellobiase (casB).